The primary structure comprises 423 residues: 58 kDa phosphoprotein (423 aa).

The span at 46–60 shows a compositional bias: basic and acidic residues; sequence KMGYEKMKSEDSTEE. The interval 46–82 is disordered; that stretch reads KMGYEKMKSEDSTEEKSDEEEEDEEEEEEEEEDDDPE. The span at 61 to 82 shows a compositional bias: acidic residues; it reads KSDEEEEDEEEEEEEEEDDDPE. TPR repeat units lie at residues 113 to 146, 147 to 180, and 181 to 214; these read ICKL…GNPS, AMIY…NVDS, and ANAY…DYDE. The segment at 260-301 is disordered; the sequence is KKKAEKMYKENNKRENYDSDSSDSSYSEPDFSGDFPGGMPGG. Residues 264 to 276 are compositionally biased toward basic and acidic residues; sequence EKMYKENNKRENY. Positions 292-362 are 19 X 3-4 AA approximate repeats; sequence GDFPGGMPGG…GMPGMPGGMP (71 aa). The 63-residue stretch at 361-423 folds into the STI1 domain; that stretch reads MPDLNSPEMK…GGMMGEKPKP (63 aa).

Its subcellular location is the cytoplasm. Its function is as follows. May play a role in protein folding or protein-protein interactions. May act as a co-chaperone. This Plasmodium berghei protein is 58 kDa phosphoprotein.